Consider the following 208-residue polypeptide: Large ribosomal subunit protein bL9 (208 aa).

The segment at 161-208 (KKRKIEKEVEEGSGTSVDESLKLDSVSDSIDTSGVNSSDKEEENNIIE) is disordered. The segment covering 186 to 197 (VSDSIDTSGVNS) has biased composition (polar residues).

It belongs to the bacterial ribosomal protein bL9 family.

Functionally, binds to the 23S rRNA. The polypeptide is Large ribosomal subunit protein bL9 (Ehrlichia canis (strain Jake)).